We begin with the raw amino-acid sequence, 628 residues long: 3-hydroxy-3-methylglutaryl-coenzyme A reductase 2 (628 aa).

A run of 2 helical transmembrane segments spans residues 38–58 (PLYL…YFLL) and 78–98 (EIVA…FFGI). The interval 99–212 (DFVQSLIIRP…HEKTVIVTTE (114 aa)) is linker. The N-linked (GlcNAc...) asparagine glycan is linked to N153. Positions 213 to 628 (EDEEIIKSVV…SSKDMSNLSS (416 aa)) are catalytic. The Charge relay system role is filled by E307. N371 carries N-linked (GlcNAc...) asparagine glycosylation. The Charge relay system role is filled by K439. N-linked (GlcNAc...) asparagine glycosylation occurs at N484. D515 acts as the Charge relay system in catalysis. The Proton donor role is filled by H613. 2 N-linked (GlcNAc...) asparagine glycosylation sites follow: N617 and N625.

Belongs to the HMG-CoA reductase family.

It is found in the endoplasmic reticulum membrane. It localises to the mitochondrion membrane. The protein localises to the plastid membrane. It catalyses the reaction (R)-mevalonate + 2 NADP(+) + CoA = (3S)-3-hydroxy-3-methylglutaryl-CoA + 2 NADPH + 2 H(+). The protein operates within metabolic intermediate biosynthesis; (R)-mevalonate biosynthesis; (R)-mevalonate from acetyl-CoA: step 3/3. Catalyzes the synthesis of mevalonate. The specific precursor of all isoprenoid compounds present in plants. This Gossypium hirsutum (Upland cotton) protein is 3-hydroxy-3-methylglutaryl-coenzyme A reductase 2 (HMG2).